Consider the following 308-residue polypeptide: D-alanine--D-alanine ligase (308 aa).

An ATP-grasp domain is found at 102–302; that stretch reads KKVAAAAGVA…FGELLSWMVE (201 aa). 128–183 contacts ATP; sequence PMEPPYVVKPVREGSSFGVVIVKEDQTHPPQIISSAEWNYGAEVLVEKYIPGRELT. Residues Asp-252, Glu-269, and Asn-271 each contribute to the Mg(2+) site.

This sequence belongs to the D-alanine--D-alanine ligase family. The cofactor is Mg(2+). Requires Mn(2+) as cofactor.

The protein localises to the cytoplasm. It catalyses the reaction 2 D-alanine + ATP = D-alanyl-D-alanine + ADP + phosphate + H(+). The protein operates within cell wall biogenesis; peptidoglycan biosynthesis. Cell wall formation. This Brucella anthropi (strain ATCC 49188 / DSM 6882 / CCUG 24695 / JCM 21032 / LMG 3331 / NBRC 15819 / NCTC 12168 / Alc 37) (Ochrobactrum anthropi) protein is D-alanine--D-alanine ligase.